Reading from the N-terminus, the 88-residue chain is Small ribosomal subunit protein uS15 (88 aa).

Belongs to the universal ribosomal protein uS15 family. As to quaternary structure, part of the 30S ribosomal subunit. Forms a bridge to the 50S subunit in the 70S ribosome, contacting the 23S rRNA.

Its function is as follows. One of the primary rRNA binding proteins, it binds directly to 16S rRNA where it helps nucleate assembly of the platform of the 30S subunit by binding and bridging several RNA helices of the 16S rRNA. Forms an intersubunit bridge (bridge B4) with the 23S rRNA of the 50S subunit in the ribosome. This chain is Small ribosomal subunit protein uS15, found in Francisella tularensis subsp. holarctica (strain LVS).